The following is a 164-amino-acid chain: MRVGVYPGSFDPITKGHLDLIERAASKFDKVIVAVLININKKGMFSIEERVNLIEKCVAKYNNVEVKSFNGLLIDFVRKEKADVIIKGLRSVTDFEYEFQMALMNRELANEVETVFMVTSPNYSYISSSAIKQVASFNGEIKNFVPKEIVEDLEERIISLRGEG.

Ser-9 contributes to the substrate binding site. ATP contacts are provided by residues 9–10 and His-17; that span reads SF. Lys-41, Leu-73, and Lys-87 together coordinate substrate. ATP is bound by residues 88–90, Glu-98, and 123–129; these read GLR and YSYISSS.

Belongs to the bacterial CoaD family. Homohexamer. Requires Mg(2+) as cofactor.

It is found in the cytoplasm. The catalysed reaction is (R)-4'-phosphopantetheine + ATP + H(+) = 3'-dephospho-CoA + diphosphate. It functions in the pathway cofactor biosynthesis; coenzyme A biosynthesis; CoA from (R)-pantothenate: step 4/5. Its function is as follows. Reversibly transfers an adenylyl group from ATP to 4'-phosphopantetheine, yielding dephospho-CoA (dPCoA) and pyrophosphate. This chain is Phosphopantetheine adenylyltransferase, found in Clostridium perfringens (strain 13 / Type A).